A 49-amino-acid polypeptide reads, in one-letter code: Metallothionein (49 aa).

Positions 1-16 are beta; the sequence is SCAGSCKCKNCRCRSC. Positions 2, 6, 8, 11, 13, 16, 20, 21, 23, 24, 28, 31, 35, 37, 45, 47, and 48 each coordinate a divalent metal cation. Residues 17–49 are alpha; the sequence is RKSCCSCCPAGCNNCAKGCVCKEPASSKCSCCH.

This sequence belongs to the metallothionein superfamily. Type 1 family.

Metallothioneins have a high content of cysteine residues that bind various heavy metals. The polypeptide is Metallothionein (Phasianus colchicus colchicus (Black-necked pheasant)).